A 221-amino-acid chain; its full sequence is MKLRAVVLGLATLCTSTATFAGMVSTSSNLEFLAIDGQKASKSLGKAKTFTVDDTQSHQVVVRLNEIVGSGSNQSLFESNPVIVTFQGNAEDLVISAPAIRNLDSGDKFNQMPNITVKTKSGNAISAKVDVLKQEGLFPSGNVLNDLAEYNASGAVASVSKFTATTSANSMVAAPAGNAKANKGKVVVQGENVAEQQLQYWFQQADKETQTRFLNWAKSHK.

An N-terminal signal peptide occupies residues 1–21 (MKLRAVVLGLATLCTSTATFA).

Belongs to the UPF0319 family.

In Haemophilus influenzae (strain PittGG), this protein is UPF0319 protein CGSHiGG_02140.